The primary structure comprises 216 residues: Molybdenum cofactor guanylyltransferase (216 aa).

GTP contacts are provided by residues 16–18 (LAG), K28, N57, D73, and D108. Mg(2+) is bound at residue D108.

The protein belongs to the MobA family. As to quaternary structure, monomer. The cofactor is Mg(2+).

The protein localises to the cytoplasm. It catalyses the reaction Mo-molybdopterin + GTP + H(+) = Mo-molybdopterin guanine dinucleotide + diphosphate. Functionally, transfers a GMP moiety from GTP to Mo-molybdopterin (Mo-MPT) cofactor (Moco or molybdenum cofactor) to form Mo-molybdopterin guanine dinucleotide (Mo-MGD) cofactor. In Rhizobium rhizogenes (strain K84 / ATCC BAA-868) (Agrobacterium radiobacter), this protein is Molybdenum cofactor guanylyltransferase.